The primary structure comprises 198 residues: Protein GrpE (198 aa).

It belongs to the GrpE family. As to quaternary structure, homodimer.

The protein localises to the cytoplasm. Participates actively in the response to hyperosmotic and heat shock by preventing the aggregation of stress-denatured proteins, in association with DnaK and GrpE. It is the nucleotide exchange factor for DnaK and may function as a thermosensor. Unfolded proteins bind initially to DnaJ; upon interaction with the DnaJ-bound protein, DnaK hydrolyzes its bound ATP, resulting in the formation of a stable complex. GrpE releases ADP from DnaK; ATP binding to DnaK triggers the release of the substrate protein, thus completing the reaction cycle. Several rounds of ATP-dependent interactions between DnaJ, DnaK and GrpE are required for fully efficient folding. The polypeptide is Protein GrpE (Actinobacillus pleuropneumoniae serotype 5b (strain L20)).